Here is a 351-residue protein sequence, read N- to C-terminus: Glucose 1-dehydrogenase 1 (351 aa).

Zn(2+) is bound at residue Cys-39. Residue Thr-41 coordinates substrate. His-64 and Glu-65 together coordinate Zn(2+). Glu-113 and Glu-149 together coordinate substrate. Glu-149 is a Zn(2+) binding site. Residues 182–185 (AGPI), 265–267 (LGI), and 292–294 (ATN) contribute to the NADP(+) site. Asn-294 lines the substrate pocket.

This sequence belongs to the zinc-containing alcohol dehydrogenase family. Glucose 1-dehydrogenase subfamily. The cofactor is Zn(2+).

It catalyses the reaction D-glucose + NAD(+) = D-glucono-1,5-lactone + NADH + H(+). It carries out the reaction D-glucose + NADP(+) = D-glucono-1,5-lactone + NADPH + H(+). Catalyzes the NAD(P)(+)-dependent oxidation of D-glucose to D-gluconate via gluconolactone. Can utilize both NAD(+) and NADP(+) as electron acceptor. Is involved in the degradation of glucose through a non-phosphorylative variant of the Entner-Doudoroff pathway. The sequence is that of Glucose 1-dehydrogenase 1 from Vulcanisaeta moutnovskia (strain 768-28).